Consider the following 325-residue polypeptide: GPI-linked NAD(P)(+)--arginine ADP-ribosyltransferase 1 (325 aa).

An N-terminal signal peptide occupies residues 1–22 (MKIPAMMSLLLVSVGLRDGVQV). 2 disulfide bridges follow: C53–C272 and C169–C219. N65 is a glycosylation site (N-linked (GlcNAc...) asparagine). Residues 73–268 (KVYADGWAQA…IYLRALGKRS (196 aa)) enclose the TR mART core domain. Residues Y117 and R174 each contribute to the NAD(+) site. Active-site residues include R174 and S197. S228 provides a ligand contact to NAD(+). E235 is an active-site residue. An N-linked (GlcNAc...) asparagine glycan is attached at N248. S290 carries the GPI-anchor amidated serine lipid modification. A propeptide spans 291–325 (APGSISASCSLLLLLLFLVLSALPENPGLQQLTRC) (removed in mature form).

This sequence belongs to the Arg-specific ADP-ribosyltransferase family. As to expression, abundantly expressed in cardiac and skeletal muscle. Low levels also found in lung.

The protein localises to the sarcoplasmic reticulum membrane. It carries out the reaction L-arginyl-[protein] + NAD(+) = N(omega)-(ADP-D-ribosyl)-L-arginyl-[protein] + nicotinamide + H(+). In terms of biological role, has ADP-ribosyltransferase activity toward GLP1R. This is GPI-linked NAD(P)(+)--arginine ADP-ribosyltransferase 1 (Art1) from Mus musculus (Mouse).